We begin with the raw amino-acid sequence, 416 residues long: Lipoyl synthase, mitochondrial (416 aa).

The transit peptide at 1-33 (MAAASTNRLRLLYTSTRASLPQSTPSILTTRTY) directs the protein to the mitochondrion. Residues 20-52 (LPQSTPSILTTRTYATTDSSTSATSTPKPRRRT) form a disordered region. The segment covering 29–46 (TTRTYATTDSSTSATSTP) has biased composition (low complexity). 7 residues coordinate [4Fe-4S] cluster: C133, C138, C144, C164, C168, C171, and S379. Residues 147 to 368 (GGDKAAATAT…QRRAEELGFL (222 aa)) enclose the Radical SAM core domain.

This sequence belongs to the radical SAM superfamily. Lipoyl synthase family. Requires [4Fe-4S] cluster as cofactor.

Its subcellular location is the mitochondrion. The catalysed reaction is [[Fe-S] cluster scaffold protein carrying a second [4Fe-4S](2+) cluster] + N(6)-octanoyl-L-lysyl-[protein] + 2 oxidized [2Fe-2S]-[ferredoxin] + 2 S-adenosyl-L-methionine + 4 H(+) = [[Fe-S] cluster scaffold protein] + N(6)-[(R)-dihydrolipoyl]-L-lysyl-[protein] + 4 Fe(3+) + 2 hydrogen sulfide + 2 5'-deoxyadenosine + 2 L-methionine + 2 reduced [2Fe-2S]-[ferredoxin]. The protein operates within protein modification; protein lipoylation via endogenous pathway; protein N(6)-(lipoyl)lysine from octanoyl-[acyl-carrier-protein]: step 2/2. Functionally, catalyzes the radical-mediated insertion of two sulfur atoms into the C-6 and C-8 positions of the octanoyl moiety bound to the lipoyl domains of lipoate-dependent enzymes, thereby converting the octanoylated domains into lipoylated derivatives. This is Lipoyl synthase, mitochondrial from Aspergillus niger (strain ATCC MYA-4892 / CBS 513.88 / FGSC A1513).